We begin with the raw amino-acid sequence, 357 residues long: SPbeta prophage-derived pesticidal crystal protein-like YokG (357 aa).

It belongs to the cry6A endotoxin family.

This is SPbeta prophage-derived pesticidal crystal protein-like YokG (yokG) from Bacillus subtilis (strain 168).